The sequence spans 343 residues: Probable dual-specificity RNA methyltransferase RlmN (343 aa).

The active-site Proton acceptor is the glutamate 94. The region spanning 100 to 330 (YDSRVTVCVS…ATVRMSMGSD (231 aa)) is the Radical SAM core domain. The cysteines at positions 107 and 335 are disulfide-linked. [4Fe-4S] cluster contacts are provided by cysteine 114, cysteine 118, and cysteine 121. S-adenosyl-L-methionine is bound by residues 161–162 (GE), serine 193, 216–218 (SLH), and asparagine 292. Cysteine 335 acts as the S-methylcysteine intermediate in catalysis.

Belongs to the radical SAM superfamily. RlmN family. Requires [4Fe-4S] cluster as cofactor.

It is found in the cytoplasm. The enzyme catalyses adenosine(2503) in 23S rRNA + 2 reduced [2Fe-2S]-[ferredoxin] + 2 S-adenosyl-L-methionine = 2-methyladenosine(2503) in 23S rRNA + 5'-deoxyadenosine + L-methionine + 2 oxidized [2Fe-2S]-[ferredoxin] + S-adenosyl-L-homocysteine. The catalysed reaction is adenosine(37) in tRNA + 2 reduced [2Fe-2S]-[ferredoxin] + 2 S-adenosyl-L-methionine = 2-methyladenosine(37) in tRNA + 5'-deoxyadenosine + L-methionine + 2 oxidized [2Fe-2S]-[ferredoxin] + S-adenosyl-L-homocysteine. Specifically methylates position 2 of adenine 2503 in 23S rRNA and position 2 of adenine 37 in tRNAs. This Clostridioides difficile (strain 630) (Peptoclostridium difficile) protein is Probable dual-specificity RNA methyltransferase RlmN.